We begin with the raw amino-acid sequence, 504 residues long: uncharacterized protein (504 aa).

The helical transmembrane segment at 26 to 46 (ILFLLLGLIILVNISINVTTV) threads the bilayer. The segment covering 103-112 (PTQCSSSSTH) has biased composition (polar residues). 3 disordered regions span residues 103-180 (PTQC…TRPM), 313-402 (YDAR…PLTT), and 431-504 (QRLA…GKLN). Residues 113–128 (YFRKHSNDRRSRRRYC) are compositionally biased toward basic residues. Positions 135–147 (QIRQSNQQQSCHS) are enriched in polar residues. Residues 313–324 (YDARDQWRRGTE) are compositionally biased toward basic and acidic residues. The span at 349–377 (SSQAHRQNFPSYTHSQPNHSPPQSVGYSS) shows a compositional bias: polar residues. Basic and acidic residues-rich tracts occupy residues 378-389 (RESHEVRRRAPD) and 467-478 (LELKRQVQENRG). Positions 494–504 (SLHRSRTGKLN) are enriched in basic residues.

The protein resides in the membrane. This is an uncharacterized protein from Rattus norvegicus (Rat).